A 416-amino-acid chain; its full sequence is Serine hydroxymethyltransferase (416 aa).

(6S)-5,6,7,8-tetrahydrofolate contacts are provided by residues Leu-117 and 121 to 123 (GHL). The residue at position 226 (Lys-226) is an N6-(pyridoxal phosphate)lysine. Glu-242 serves as a coordination point for (6S)-5,6,7,8-tetrahydrofolate.

This sequence belongs to the SHMT family. As to quaternary structure, homodimer. Requires pyridoxal 5'-phosphate as cofactor.

The protein resides in the cytoplasm. The catalysed reaction is (6R)-5,10-methylene-5,6,7,8-tetrahydrofolate + glycine + H2O = (6S)-5,6,7,8-tetrahydrofolate + L-serine. It participates in one-carbon metabolism; tetrahydrofolate interconversion. It functions in the pathway amino-acid biosynthesis; glycine biosynthesis; glycine from L-serine: step 1/1. In terms of biological role, catalyzes the reversible interconversion of serine and glycine with tetrahydrofolate (THF) serving as the one-carbon carrier. This reaction serves as the major source of one-carbon groups required for the biosynthesis of purines, thymidylate, methionine, and other important biomolecules. Also exhibits THF-independent aldolase activity toward beta-hydroxyamino acids, producing glycine and aldehydes, via a retro-aldol mechanism. The sequence is that of Serine hydroxymethyltransferase from Endomicrobium trichonymphae.